The chain runs to 147 residues: Deoxyuridine 5'-triphosphate nucleotidohydrolase (147 aa).

Substrate contacts are provided by residues arginine 67–glycine 69, asparagine 80, and threonine 84–aspartate 86.

The protein belongs to the dUTPase family. Mg(2+) serves as cofactor.

It carries out the reaction dUTP + H2O = dUMP + diphosphate + H(+). It functions in the pathway pyrimidine metabolism; dUMP biosynthesis; dUMP from dCTP (dUTP route): step 2/2. Its function is as follows. This enzyme is involved in nucleotide metabolism: it produces dUMP, the immediate precursor of thymidine nucleotides and it decreases the intracellular concentration of dUTP so that uracil cannot be incorporated into DNA. This chain is Deoxyuridine 5'-triphosphate nucleotidohydrolase, found in Syntrophotalea carbinolica (strain DSM 2380 / NBRC 103641 / GraBd1) (Pelobacter carbinolicus).